Here is a 426-residue protein sequence, read N- to C-terminus: Mitochondrial distribution and morphology protein 12 (426 aa).

The region spanning 1-426 (MSIEVDWKTA…VFPSFWTFLI (426 aa)) is the SMP-LTD domain. Disordered stretches follow at residues 88–147 (AHGN…GTPG), 185–264 (WTDH…FRFP), and 346–370 (ADDQ…SPKR). Basic and acidic residues predominate over residues 96–109 (THSELNEPPYRDEV). The segment covering 216-236 (SSNPTSRPSTSSTLPSHPSGS) has biased composition (low complexity). Basic and acidic residues-rich tracts occupy residues 244–264 (SHPE…FRFP) and 349–360 (QETRDKDDHPRS).

This sequence belongs to the MDM12 family. Component of the ER-mitochondria encounter structure (ERMES) or MDM complex, composed of mmm1, mdm10, mdm12 and mdm34. A mmm1 homodimer associates with one molecule of mdm12 on each side in a pairwise head-to-tail manner, and the SMP-LTD domains of mmm1 and mdm12 generate a continuous hydrophobic tunnel for phospholipid trafficking.

The protein resides in the mitochondrion outer membrane. Its subcellular location is the endoplasmic reticulum membrane. Component of the ERMES/MDM complex, which serves as a molecular tether to connect the endoplasmic reticulum (ER) and mitochondria. Components of this complex are involved in the control of mitochondrial shape and protein biogenesis, and function in nonvesicular lipid trafficking between the ER and mitochondria. Mdm12 is required for the interaction of the ER-resident membrane protein mmm1 and the outer mitochondrial membrane-resident beta-barrel protein mdm10. The mdm12-mmm1 subcomplex functions in the major beta-barrel assembly pathway that is responsible for biogenesis of all mitochondrial outer membrane beta-barrel proteins, and acts in a late step after the SAM complex. The mdm10-mdm12-mmm1 subcomplex further acts in the TOM40-specific pathway after the action of the mdm12-mmm1 complex. Essential for establishing and maintaining the structure of mitochondria and maintenance of mtDNA nucleoids. The protein is Mitochondrial distribution and morphology protein 12 of Aspergillus terreus (strain NIH 2624 / FGSC A1156).